A 1402-amino-acid chain; its full sequence is DNA-directed RNA polymerase subunit beta' (1402 aa).

Zn(2+) is bound by residues C72, C74, C87, and C90. Mg(2+) contacts are provided by D463, D465, and D467. Zn(2+)-binding residues include C811, C885, C892, and C895.

The protein belongs to the RNA polymerase beta' chain family. As to quaternary structure, the RNAP catalytic core consists of 2 alpha, 1 beta, 1 beta' and 1 omega subunit. When a sigma factor is associated with the core the holoenzyme is formed, which can initiate transcription. The cofactor is Mg(2+). Zn(2+) serves as cofactor.

It carries out the reaction RNA(n) + a ribonucleoside 5'-triphosphate = RNA(n+1) + diphosphate. Its function is as follows. DNA-dependent RNA polymerase catalyzes the transcription of DNA into RNA using the four ribonucleoside triphosphates as substrates. The protein is DNA-directed RNA polymerase subunit beta' of Paracoccus denitrificans (strain Pd 1222).